Reading from the N-terminus, the 176-residue chain is MNSEFVEVAIIGRCVGLKGCVKLHNKGDFPEQFKKNAVFFDKDGNEFIIKSYDVSKETALFEGYEDIDLAKSLVNKILYTTKELTRKNCKLKEGEFFYFDVLGLNIVENGEILGVVKDIEDNLNNALLYVKTSDDLVSIGFAKNFYVPYIDRFVISVSLENKEILTKDAKSILENS.

The 80-residue stretch at 93 to 172 folds into the PRC barrel domain; the sequence is EGEFFYFDVL…EILTKDAKSI (80 aa).

This sequence belongs to the RimM family. As to quaternary structure, binds ribosomal protein uS19.

It is found in the cytoplasm. Functionally, an accessory protein needed during the final step in the assembly of 30S ribosomal subunit, possibly for assembly of the head region. Essential for efficient processing of 16S rRNA. May be needed both before and after RbfA during the maturation of 16S rRNA. It has affinity for free ribosomal 30S subunits but not for 70S ribosomes. This chain is Ribosome maturation factor RimM, found in Campylobacter curvus (strain 525.92).